Here is a 555-residue protein sequence, read N- to C-terminus: Protein NRT1/ PTR FAMILY 5.4 (555 aa).

A run of 2 helical transmembrane segments spans residues 18-38 (AALF…GLAS) and 62-82 (WIGV…SILG). Thr-86 bears the Phosphothreonine mark. The next 10 helical transmembrane spans lie at 87–107 (VLLT…SVTV), 116–136 (VFFM…PCVM), 159–179 (NYWY…LIFI), 187–207 (LGFS…LIGI), 311–331 (IPIW…NTFF), 348–368 (IPPA…IPLY), 392–412 (IGVG…VEAK), 435–455 (LWLL…IVGM), 470–490 (IGAA…TGII), and 516–536 (YYYW…LFIA).

Belongs to the major facilitator superfamily. Proton-dependent oligopeptide transporter (POT/PTR) (TC 2.A.17) family. As to expression, expressed in roots and flowers.

It is found in the membrane. The sequence is that of Protein NRT1/ PTR FAMILY 5.4 (NPF5.4) from Arabidopsis thaliana (Mouse-ear cress).